The following is a 225-amino-acid chain: Redox-sensing transcriptional repressor Rex (225 aa).

Positions Ile-16–Phe-55 form a DNA-binding region, H-T-H motif. An NAD(+)-binding site is contributed by Gly-90–Gly-95.

It belongs to the transcriptional regulatory Rex family. As to quaternary structure, homodimer.

The protein resides in the cytoplasm. Modulates transcription in response to changes in cellular NADH/NAD(+) redox state. The polypeptide is Redox-sensing transcriptional repressor Rex (Lactiplantibacillus plantarum (strain ATCC BAA-793 / NCIMB 8826 / WCFS1) (Lactobacillus plantarum)).